Here is a 908-residue protein sequence, read N- to C-terminus: DNA mismatch repair protein MutS (908 aa).

Residue 659-666 coordinates ATP; sequence GPNMAGKS.

Belongs to the DNA mismatch repair MutS family.

In terms of biological role, this protein is involved in the repair of mismatches in DNA. It is possible that it carries out the mismatch recognition step. This protein has a weak ATPase activity. This chain is DNA mismatch repair protein MutS, found in Parvibaculum lavamentivorans (strain DS-1 / DSM 13023 / NCIMB 13966).